The sequence spans 157 residues: Endoribonuclease YbeY (157 aa).

Residues His114, His118, and His124 each contribute to the Zn(2+) site.

Belongs to the endoribonuclease YbeY family. Zn(2+) is required as a cofactor.

The protein localises to the cytoplasm. Its function is as follows. Single strand-specific metallo-endoribonuclease involved in late-stage 70S ribosome quality control and in maturation of the 3' terminus of the 16S rRNA. The polypeptide is Endoribonuclease YbeY (Yersinia pestis).